The primary structure comprises 154 residues: Myoglobin (154 aa).

The region spanning 2 to 148 is the Globin domain; it reads VLSDGEWQLV…FRKDIAAKYK (147 aa). At Ser-4 the chain carries Phosphoserine. His-65 lines the nitrite pocket. His-65 contributes to the O2 binding site. The residue at position 68 (Thr-68) is a Phosphothreonine. His-94 is a heme b binding site.

The protein belongs to the globin family. Monomeric.

It localises to the cytoplasm. It is found in the sarcoplasm. It carries out the reaction Fe(III)-heme b-[protein] + nitric oxide + H2O = Fe(II)-heme b-[protein] + nitrite + 2 H(+). The catalysed reaction is H2O2 + AH2 = A + 2 H2O. Its function is as follows. Monomeric heme protein which primary function is to store oxygen and facilitate its diffusion within muscle tissues. Reversibly binds oxygen through a pentacoordinated heme iron and enables its timely and efficient release as needed during periods of heightened demand. Depending on the oxidative conditions of tissues and cells, and in addition to its ability to bind oxygen, it also has a nitrite reductase activity whereby it regulates the production of bioactive nitric oxide. Under stress conditions, like hypoxia and anoxia, it also protects cells against reactive oxygen species thanks to its pseudoperoxidase activity. The sequence is that of Myoglobin from Balaena mysticetus (Bowhead whale).